Here is a 224-residue protein sequence, read N- to C-terminus: Pyridoxine/pyridoxamine 5'-phosphate oxidase (224 aa).

Residues 69–74 (RHVLLK), 83–84 (FT), Arg-89, Lys-90, and Gln-112 contribute to the FMN site. Lys-74 lines the substrate pocket. Substrate-binding residues include Tyr-130, Arg-134, and Ser-138. Residues 148-149 (QS) and Trp-194 each bind FMN. 200–202 (RMH) provides a ligand contact to substrate. Residue Arg-204 coordinates FMN.

It belongs to the pyridoxamine 5'-phosphate oxidase family. In terms of assembly, homodimer. Requires FMN as cofactor.

The catalysed reaction is pyridoxamine 5'-phosphate + O2 + H2O = pyridoxal 5'-phosphate + H2O2 + NH4(+). It catalyses the reaction pyridoxine 5'-phosphate + O2 = pyridoxal 5'-phosphate + H2O2. It participates in cofactor metabolism; pyridoxal 5'-phosphate salvage; pyridoxal 5'-phosphate from pyridoxamine 5'-phosphate: step 1/1. It functions in the pathway cofactor metabolism; pyridoxal 5'-phosphate salvage; pyridoxal 5'-phosphate from pyridoxine 5'-phosphate: step 1/1. Functionally, catalyzes the oxidation of either pyridoxine 5'-phosphate (PNP) or pyridoxamine 5'-phosphate (PMP) into pyridoxal 5'-phosphate (PLP). This is Pyridoxine/pyridoxamine 5'-phosphate oxidase from Acidothermus cellulolyticus (strain ATCC 43068 / DSM 8971 / 11B).